Consider the following 405-residue polypeptide: MRIYLRTFGLCIVVALLSLVFLFSKHDEGSFSAGFKQVRAPLQQKSFNGAKAKQRPTATTSHRDVVQNPNSPVQEEVLMHLAAVACGERHGEVVNMLKTAVTLSQRALRFHIFAEQQLQTSIKADLDSWPAFIQGKFSYVLHPISFPHEHHEEWSQLFKPCASQRLFLPMILRELDSLLYVDTDVLFLQPVELIWDMLMLFNSTQLIAMAPEHEEPRIAWYSRFSWHPYYGKMGINSGVMLMNLTRMRITQFKNDMTPVGLHWDELLMPLLQKYKLNITWGDQDLINIIFHYNPEMVYTLPCHWNYRPDHCIYGSNCAPAEDEGVFVLHGNRGVFHSDKQPAFRAVYEAFEQYTFGEDLRQSLLSRLEVALNETTHTYCGKASHFFTTGLQKSVRRLQRATPPGD.

Residues 1–2 (MR) are Cytoplasmic-facing. A helical; Signal-anchor for type II membrane protein transmembrane segment spans residues 3–23 (IYLRTFGLCIVVALLSLVFLF). At 24–405 (SKHDEGSFSA…RLQRATPPGD (382 aa)) the chain is on the lumenal side. The segment at 46–65 (SFNGAKAKQRPTATTSHRDV) is disordered. N-linked (GlcNAc...) asparagine glycans are attached at residues N202, N243, N277, and N372.

It belongs to the glycosyltransferase 8 family.

The protein localises to the membrane. It catalyses the reaction 3-O-(beta-D-glucosyl)-L-seryl-[EGF-like domain protein] + UDP-alpha-D-xylose = 3-O-[alpha-D-xylosyl-(1-&gt;3)-beta-D-glucosyl]-L-seryl-[EGF-like domain protein] + UDP + H(+). Functionally, glycosyltransferase which elongates the O-linked glucose attached to EGF-like repeats in the extracellular domain of Notch proteins by catalyzing the addition of xylose. This is Glucoside xylosyltransferase 1 (gxylt1) from Danio rerio (Zebrafish).